A 100-amino-acid chain; its full sequence is MYB-like transcription factor TCL2 (100 aa).

In terms of domain architecture, Myb-like spans 37 to 74 (TEQEEDLIFRMHRLVGDRWDLIAGRVVGREAKDIERYW).

In terms of assembly, interacts with GL3. Expressed in cotyledons, petioles, rosette leaves, hydathodes, cauline leaves, stems, pedicels and flower buds.

The protein localises to the nucleus. In terms of biological role, MYB-type transcription factor involved in trichome cell specification. Acts as a negative regulator of trichome patterning and formation. May function by suppressing the expression of GL3. The protein is MYB-like transcription factor TCL2 (TCL2) of Arabidopsis thaliana (Mouse-ear cress).